The primary structure comprises 236 residues: Probable glutathione S-transferase BZ2 (236 aa).

A GST N-terminal domain is found at 1 to 80; it reads MRVLGGEVSP…YIEDVARESG (80 aa). Glutathione-binding positions include serine 9, lysine 37, isoleucine 51, and 64–65; that span reads ES. The GST C-terminal domain occupies 92-221; the sequence is DPYERAMHRF…LPDTEKVVQF (130 aa).

Belongs to the GST superfamily. HSP26 family.

The catalysed reaction is RX + glutathione = an S-substituted glutathione + a halide anion + H(+). The protein operates within pigment biosynthesis; anthocyanin biosynthesis. The protein is Probable glutathione S-transferase BZ2 (BZ2) of Zea mays (Maize).